We begin with the raw amino-acid sequence, 142 residues long: Class II hydrophobin 7 (142 aa).

The first 16 residues, 1-16 (MKFLTVAIVLAAAASA), serve as a signal peptide directing secretion. Cystine bridges form between cysteine 73-cysteine 123, cysteine 84-cysteine 114, cysteine 85-cysteine 97, and cysteine 124-cysteine 135.

This sequence belongs to the cerato-ulmin hydrophobin family. In terms of assembly, homodimer. Homodimers further self-assemble to form highly ordered films at water-air interfaces through intermolecular interactions.

The protein resides in the secreted. The protein localises to the cell wall. Aerial growth, conidiation, and dispersal of filamentous fungi in the environment rely upon a capability of their secreting small amphipathic proteins called hydrophobins (HPBs) with low sequence identity. Class I can self-assemble into an outermost layer of rodlet bundles on aerial cell surfaces, conferring cellular hydrophobicity that supports fungal growth, development and dispersal; whereas Class II form highly ordered films at water-air interfaces through intermolecular interactions but contribute nothing to the rodlet structure. This is Class II hydrophobin 7 from Trichoderma asperellum (strain ATCC 204424 / CBS 433.97 / NBRC 101777).